A 1118-amino-acid chain; its full sequence is Isoleucine--tRNA ligase (1118 aa).

Residues 64 to 74 (PFANGLPHYGH) carry the 'HIGH' region motif. The 'KMSKS' region motif lies at 647 to 651 (KLSKR). Lysine 650 contacts ATP.

This sequence belongs to the class-I aminoacyl-tRNA synthetase family. IleS type 2 subfamily. Monomer. It depends on Zn(2+) as a cofactor.

Its subcellular location is the cytoplasm. The enzyme catalyses tRNA(Ile) + L-isoleucine + ATP = L-isoleucyl-tRNA(Ile) + AMP + diphosphate. Functionally, catalyzes the attachment of isoleucine to tRNA(Ile). As IleRS can inadvertently accommodate and process structurally similar amino acids such as valine, to avoid such errors it has two additional distinct tRNA(Ile)-dependent editing activities. One activity is designated as 'pretransfer' editing and involves the hydrolysis of activated Val-AMP. The other activity is designated 'posttransfer' editing and involves deacylation of mischarged Val-tRNA(Ile). This Ehrlichia ruminantium (strain Gardel) protein is Isoleucine--tRNA ligase.